We begin with the raw amino-acid sequence, 28 residues long: GLMDVLKGAAKNLFASALDKLKCKVTGC.

C23 and C28 are oxidised to a cystine.

As to expression, expressed by the skin glands.

The protein resides in the secreted. Has antibacterial activity. The sequence is that of Ranatuerin-2LT from Rana latastei (Italian agile frog).